The chain runs to 363 residues: Putative replication factor C small subunit L510 (363 aa).

Gly47–Thr54 is a binding site for ATP.

It belongs to the activator 1 small subunits family. RfcS subfamily.

Its function is as follows. Part of the RFC clamp loader complex which loads the PCNA sliding clamp onto DNA. The protein is Putative replication factor C small subunit L510 of Acanthamoeba polyphaga mimivirus (APMV).